A 234-amino-acid polypeptide reads, in one-letter code: Ribosomal RNA small subunit methyltransferase G (234 aa).

Residues Gly-74, Phe-79, 125-126, and Arg-144 each bind S-adenosyl-L-methionine; that span reads AE.

This sequence belongs to the methyltransferase superfamily. RNA methyltransferase RsmG family.

The protein resides in the cytoplasm. Specifically methylates the N7 position of a guanine in 16S rRNA. The protein is Ribosomal RNA small subunit methyltransferase G of Roseiflexus castenholzii (strain DSM 13941 / HLO8).